The sequence spans 132 residues: Profilin (132 aa).

Belongs to the profilin family. As to quaternary structure, occurs in many kinds of cells as a complex with monomeric actin in a 1:1 ratio.

Its subcellular location is the cytoplasm. It localises to the cytoskeleton. Its function is as follows. Binds to actin and affects the structure of the cytoskeleton. At high concentrations, profilin prevents the polymerization of actin, whereas it enhances it at low concentrations. By binding to PIP2, it inhibits the formation of IP3 and DG. The protein is Profilin of Naegleria pringsheimi (Amoeba).